A 37-amino-acid chain; its full sequence is Photosystem I reaction center subunit VIII (37 aa).

The helical transmembrane segment at serine 9–leucine 29 threads the bilayer.

The protein belongs to the PsaI family.

Its subcellular location is the plastid. The protein resides in the chloroplast thylakoid membrane. Functionally, may help in the organization of the PsaL subunit. This is Photosystem I reaction center subunit VIII from Cucumis sativus (Cucumber).